A 145-amino-acid polypeptide reads, in one-letter code: MGRGRGKRVVRKLKLQIPGGQANPAPPVGPALGQAQVNIGEFVRQFNDATRDRMGQLIPVEITVYEDRSFTFVTKTPPAAFLLKQAAGVEKGSGEPNRSAAGRVSRAQVEEIARTKMPDLNAADVEAAVKIIEGTARSMGIKVEQ.

Belongs to the universal ribosomal protein uL11 family. As to quaternary structure, part of the ribosomal stalk of the 50S ribosomal subunit. Interacts with L10 and the large rRNA to form the base of the stalk. L10 forms an elongated spine to which L12 dimers bind in a sequential fashion forming a multimeric L10(L12)X complex. One or more lysine residues are methylated.

In terms of biological role, forms part of the ribosomal stalk which helps the ribosome interact with GTP-bound translation factors. The chain is Large ribosomal subunit protein uL11 from Rubrobacter xylanophilus (strain DSM 9941 / JCM 11954 / NBRC 16129 / PRD-1).